Reading from the N-terminus, the 281-residue chain is Inhibitor of growth protein 2 (281 aa).

Residues 49–101 (VLRELDNKYQETLKEIDDVYEKYKKEDDSNQKKRLQQHLQRALINSQELGDEK) are a coiled coil. The tract at residues 123–204 (SQCFQDPAES…AKQEREASPV (82 aa)) is disordered. Over residues 131–141 (ESERASDKSKM) the composition is skewed to basic and acidic residues. Positions 182–194 (KRSKSAKKKKRSK) are enriched in basic residues. K196 participates in a covalent cross-link: Glycyl lysine isopeptide (Lys-Gly) (interchain with G-Cter in SUMO1). The PHD-type zinc-finger motif lies at 213-262 (PTYCLCNQVSYGEMIGCDNEQCPIEWFHFSCVSLTYKPKGKWYCPKCRGD). Zn(2+) contacts are provided by C216, C218, C229, C234, H240, C243, C256, and C259. The segment covering 261 to 275 (GDNEKTMDKSTEKTK) has biased composition (basic and acidic residues). Positions 261 to 281 (GDNEKTMDKSTEKTKKERRAR) are disordered. Positions 265 to 281 (KTMDKSTEKTKKERRAR) are PBR.

It belongs to the ING family. In terms of assembly, interacts with H3K4me3 and to a lesser extent with H3K4me2. Component of a mSin3A-like complex at least consisting of SIN3A, HDAC1, HDAC2, RBBP4/RbAp48, RBBP7/RbAp46, SAP30 and ING2. In terms of processing, sumoylation enhances its association with SIN3A and is required for binding to some target gene promoters, this is the case for TMEM71.

It localises to the nucleus. Functionally, seems to be involved in p53/TP53 activation and p53/TP53-dependent apoptotic pathways, probably by enhancing acetylation of p53/TP53. Component of a mSin3A-like corepressor complex, which is probably involved in deacetylation of nucleosomal histones. ING2 activity seems to be modulated by binding to phosphoinositides (PtdInsPs). This is Inhibitor of growth protein 2 (Ing2) from Mus musculus (Mouse).